Consider the following 215-residue polypeptide: Cytochrome b6 (215 aa).

Residues methionine 1–asparagine 31 are Cytoplasmic-facing. Residues isoleucine 32 to phenylalanine 52 traverse the membrane as a helical segment. A heme c-binding site is contributed by cysteine 35. Residues alanine 53–serine 89 lie on the Lumenal, thylakoid side of the membrane. Residues arginine 83, histidine 86, histidine 100, and arginine 103 each contribute to the heme b site. Residues alanine 90 to phenylalanine 110 form a helical membrane-spanning segment. The Cytoplasmic portion of the chain corresponds to lysine 111–glutamate 115. A helical membrane pass occupies residues leucine 116 to tyrosine 136. Over serine 137 to serine 185 the chain is Lumenal, thylakoid. The chain crosses the membrane as a helical span at residues alanine 186–isoleucine 206. The heme b site is built by histidine 187 and histidine 202. At arginine 207–leucine 215 the chain is on the cytoplasmic side. Position 208 (lysine 208) interacts with heme c.

It belongs to the cytochrome b family. PetB subfamily. As to quaternary structure, the 4 large subunits of the cytochrome b6-f complex are cytochrome b6, subunit IV (17 kDa polypeptide, PetD), cytochrome f and the Rieske protein, while the 4 small subunits are PetG, PetL, PetM and PetN. The complex functions as a dimer. Requires heme b as cofactor. The cofactor is heme c.

It localises to the cellular thylakoid membrane. Functionally, component of the cytochrome b6-f complex, which mediates electron transfer between photosystem II (PSII) and photosystem I (PSI), cyclic electron flow around PSI, and state transitions. The sequence is that of Cytochrome b6 from Mastigocladus laminosus (Fischerella sp.).